A 130-amino-acid chain; its full sequence is Fluoride-specific ion channel FluC (130 aa).

The next 4 membrane-spanning stretches (helical) occupy residues 3-23, 39-59, 67-87, and 102-122; these read FVFL…YFVG, GTFS…HLAV, FGIF…SYGL, and ISYV…GWFL. Residues glycine 77 and threonine 80 each coordinate Na(+).

It belongs to the fluoride channel Fluc/FEX (TC 1.A.43) family.

Its subcellular location is the cell inner membrane. The catalysed reaction is fluoride(in) = fluoride(out). With respect to regulation, na(+) is not transported, but it plays an essential structural role and its presence is essential for fluoride channel function. In terms of biological role, fluoride-specific ion channel. Important for reducing fluoride concentration in the cell, thus reducing its toxicity. The chain is Fluoride-specific ion channel FluC from Helicobacter pylori (strain P12).